The sequence spans 78 residues: DNA import protein CedA1 (78 aa).

2 helical membrane-spanning segments follow: residues 12–32 (STVTEIGWSLFILAWAIGWAL) and 53–73 (AIIAAFFLAIGSTIFYLISYI).

In terms of assembly, forms a complex composed of CedA, CedA1 and CedA2.

The protein resides in the cell membrane. Functionally, part of the Ced system, which is involved in DNA import. The protein is DNA import protein CedA1 of Sulfolobus acidocaldarius (strain ATCC 33909 / DSM 639 / JCM 8929 / NBRC 15157 / NCIMB 11770).